The primary structure comprises 157 residues: DNA gyrase inhibitor (157 aa).

It belongs to the DNA gyrase inhibitor family. In terms of assembly, interacts with DNA gyrase.

The protein resides in the cytoplasm. Its function is as follows. Inhibits the supercoiling activity of DNA gyrase. Acts by inhibiting DNA gyrase at an early step, prior to (or at the step of) binding of DNA by the gyrase. It protects cells against toxins that target DNA gyrase, by inhibiting activity of these toxins and reducing the formation of lethal double-strand breaks in the cell. This chain is DNA gyrase inhibitor, found in Shigella boydii serotype 18 (strain CDC 3083-94 / BS512).